Reading from the N-terminus, the 253-residue chain is Hydroxyacylglutathione hydrolase (253 aa).

The Zn(2+) site is built by His54, His56, Asp58, His59, His112, Asp131, and His169.

Belongs to the metallo-beta-lactamase superfamily. Glyoxalase II family. In terms of assembly, monomer. Requires Zn(2+) as cofactor.

The enzyme catalyses an S-(2-hydroxyacyl)glutathione + H2O = a 2-hydroxy carboxylate + glutathione + H(+). It functions in the pathway secondary metabolite metabolism; methylglyoxal degradation; (R)-lactate from methylglyoxal: step 2/2. Its function is as follows. Thiolesterase that catalyzes the hydrolysis of S-D-lactoyl-glutathione to form glutathione and D-lactic acid. This chain is Hydroxyacylglutathione hydrolase, found in Bartonella quintana (strain Toulouse) (Rochalimaea quintana).